The sequence spans 101 residues: NADH-quinone oxidoreductase subunit K (101 aa).

3 helical membrane passes run 4–24 (LAHY…GIFL), 30–50 (IVLL…FVAF), and 61–81 (VFVF…LAIL).

Belongs to the complex I subunit 4L family. NDH-1 is composed of 14 different subunits. Subunits NuoA, H, J, K, L, M, N constitute the membrane sector of the complex.

The protein resides in the cell inner membrane. It catalyses the reaction a quinone + NADH + 5 H(+)(in) = a quinol + NAD(+) + 4 H(+)(out). Its function is as follows. NDH-1 shuttles electrons from NADH, via FMN and iron-sulfur (Fe-S) centers, to quinones in the respiratory chain. The immediate electron acceptor for the enzyme in this species is believed to be ubiquinone. Couples the redox reaction to proton translocation (for every two electrons transferred, four hydrogen ions are translocated across the cytoplasmic membrane), and thus conserves the redox energy in a proton gradient. The polypeptide is NADH-quinone oxidoreductase subunit K (Ralstonia nicotianae (strain ATCC BAA-1114 / GMI1000) (Ralstonia solanacearum)).